A 181-amino-acid polypeptide reads, in one-letter code: Large ribosomal subunit protein uL5 (181 aa).

This sequence belongs to the universal ribosomal protein uL5 family. In terms of assembly, part of the 50S ribosomal subunit; part of the 5S rRNA/L5/L18/L25 subcomplex. Contacts the 5S rRNA and the P site tRNA. Forms a bridge to the 30S subunit in the 70S ribosome.

In terms of biological role, this is one of the proteins that bind and probably mediate the attachment of the 5S RNA into the large ribosomal subunit, where it forms part of the central protuberance. In the 70S ribosome it contacts protein S13 of the 30S subunit (bridge B1b), connecting the 2 subunits; this bridge is implicated in subunit movement. Contacts the P site tRNA; the 5S rRNA and some of its associated proteins might help stabilize positioning of ribosome-bound tRNAs. This chain is Large ribosomal subunit protein uL5, found in Sulfurovum sp. (strain NBC37-1).